A 49-amino-acid polypeptide reads, in one-letter code: Large ribosomal subunit protein bL33B (49 aa).

Belongs to the bacterial ribosomal protein bL33 family.

The sequence is that of Large ribosomal subunit protein bL33B from Bacillus licheniformis (strain ATCC 14580 / DSM 13 / JCM 2505 / CCUG 7422 / NBRC 12200 / NCIMB 9375 / NCTC 10341 / NRRL NRS-1264 / Gibson 46).